Reading from the N-terminus, the 543-residue chain is Type I restriction enzyme MpnII methylase subunit (543 aa).

S-adenosyl-L-methionine-binding positions include E208–Q213, S240–S242, and E265.

The protein belongs to the N(4)/N(6)-methyltransferase family. The methyltransferase is composed of M and S polypeptides.

The catalysed reaction is a 2'-deoxyadenosine in DNA + S-adenosyl-L-methionine = an N(6)-methyl-2'-deoxyadenosine in DNA + S-adenosyl-L-homocysteine + H(+). Its function is as follows. The subtype gamma methyltransferase (M) subunit of a type I restriction enzyme. The M and S subunits together form a methyltransferase (MTase) that probably methylates A-2 on the top strand and A-3 on the bottom strand of the sequence 5'-GAN(7)TAY-3'. As the bacterial DNA is methylated on this sequence and this is the only type I methylase in the genome, it is probably responsible for all of the methylation on this site in the genome. The R subunit has multiple frameshifts and is probably not expressed in this bacteria. The protein is Type I restriction enzyme MpnII methylase subunit of Mycoplasma pneumoniae (strain ATCC 29342 / M129 / Subtype 1) (Mycoplasmoides pneumoniae).